A 328-amino-acid chain; its full sequence is Nickel import system permease protein NikB (328 aa).

6 helical membrane-spanning segments follow: residues 11–31 (LMQM…LMKL), 104–124 (LLIS…LGII), 139–159 (VIST…LLFI), 170–190 (ILSQ…AYII), 229–249 (ILPI…GTVV), and 279–299 (VLFI…LTLL). In terms of domain architecture, ABC transmembrane type-1 spans 100 to 297 (APITLLISFS…IINTIADLLT (198 aa)).

This sequence belongs to the binding-protein-dependent transport system permease family. OppBC subfamily. The complex is composed of two ATP-binding proteins (NikD and NikE), two transmembrane proteins (NikB and NikC) and a solute-binding protein (NikA).

Its subcellular location is the cell membrane. In terms of biological role, part of the ABC transporter complex NikABCDE (Opp2) involved in nickel import. Probably responsible for the translocation of the substrate across the membrane. The chain is Nickel import system permease protein NikB from Staphylococcus aureus (strain MSSA476).